Consider the following 668-residue polypeptide: Fe(2+) transporter FeoB (668 aa).

One can recognise a FeoB-type G domain in the interval 3-165 (SYEIALIGNP…KKAISIAVKD (163 aa)). 10–17 (GNPNVGKS) is a binding site for GTP. Residues N21, A22, T24, and G25 each coordinate Mg(2+). Residues 35-39 (GVTVE), 56-59 (DLPG), 116-119 (NKMD), and 145-147 (SAA) contribute to the GTP site. Transmembrane regions (helical) follow at residues 344–364 (VGAV…ISFL), 386–406 (LPGK…PAIM), 418–438 (ILTI…IYAL), 450–470 (VVIL…AFLF), 515–535 (IIVF…SGYL), 574–594 (ALVF…MLYG), 613–633 (AYAF…LAVI), and 643–663 (LFAV…ISVI).

The protein belongs to the TRAFAC class TrmE-Era-EngA-EngB-Septin-like GTPase superfamily. FeoB GTPase (TC 9.A.8) family. In terms of assembly, the crystallized N-terminal domain is a homodimer.

It localises to the cell membrane. In terms of biological role, probable transporter of a GTP-driven Fe(2+) uptake system, might be able to transport Fe(2+) into or out of the cell. This Methanocaldococcus jannaschii (strain ATCC 43067 / DSM 2661 / JAL-1 / JCM 10045 / NBRC 100440) (Methanococcus jannaschii) protein is Fe(2+) transporter FeoB.